We begin with the raw amino-acid sequence, 293 residues long: 33 kDa chaperonin (293 aa).

Intrachain disulfides connect cysteine 229-cysteine 231 and cysteine 262-cysteine 265.

It belongs to the HSP33 family. Post-translationally, under oxidizing conditions two disulfide bonds are formed involving the reactive cysteines. Under reducing conditions zinc is bound to the reactive cysteines and the protein is inactive.

Its subcellular location is the cytoplasm. Redox regulated molecular chaperone. Protects both thermally unfolding and oxidatively damaged proteins from irreversible aggregation. Plays an important role in the bacterial defense system toward oxidative stress. The polypeptide is 33 kDa chaperonin (Methylobacillus flagellatus (strain ATCC 51484 / DSM 6875 / VKM B-1610 / KT)).